Here is a 277-residue protein sequence, read N- to C-terminus: Undecaprenyl-diphosphatase (277 aa).

8 helical membrane passes run 1–21, 38–58, 93–113, 118–138, 168–188, 191–211, 222–242, and 256–276; these read MDII…FLPV, SSLA…LWFF, LVWY…LFES, LFAG…TILY, AILP…VIGL, EFAA…AFVV, FNAL…YLAI, and IFAY…ITHL.

The protein belongs to the UppP family.

The protein resides in the cell membrane. The catalysed reaction is di-trans,octa-cis-undecaprenyl diphosphate + H2O = di-trans,octa-cis-undecaprenyl phosphate + phosphate + H(+). Catalyzes the dephosphorylation of undecaprenyl diphosphate (UPP). This Methanobrevibacter smithii (strain ATCC 35061 / DSM 861 / OCM 144 / PS) protein is Undecaprenyl-diphosphatase.